The following is a 184-amino-acid chain: Ribosome-recycling factor (184 aa).

This sequence belongs to the RRF family.

It is found in the cytoplasm. Functionally, responsible for the release of ribosomes from messenger RNA at the termination of protein biosynthesis. May increase the efficiency of translation by recycling ribosomes from one round of translation to another. This Onion yellows phytoplasma (strain OY-M) protein is Ribosome-recycling factor.